The chain runs to 360 residues: MATVLAIETSCDETAAAVVKKRHILSNIVASQIDIHRPYGGVVPEVASRHHVESINDVVSEALSQAQIDWPDIDGIAVTCAPGLVGALLVGLTAAKTLVMLHNKPLIGVHHLEGHIHASYLQNPDLASPFLCLLVSGGHTSLIKAEDCGLYRTLGQTRDDAAGEAFDKVARLLDLGYPGGPAIDRIAKLGNPKAFALPEGKISLPEGGFHPYDTSFSGLKTAVLRLVESFRLRGEDVPVADIAASFQQTVAQALTRRAIKCALDYGLSTIAVGGGVAANSALRQQLLTAAEDKKLQVLFPPLSLCTDNAAMIACAGAEHLDRGHTSALTLAALSRMPISKVMELYPGSSPMHPPLELDAE.

Residues His111 and His115 each coordinate Fe cation. Residues Leu134–Gly138, Asp167, Gly180, Asp184, and Asn279 contribute to the substrate site. Fe cation is bound at residue Asp307.

Belongs to the KAE1 / TsaD family. Requires Fe(2+) as cofactor.

The protein localises to the cytoplasm. It carries out the reaction L-threonylcarbamoyladenylate + adenosine(37) in tRNA = N(6)-L-threonylcarbamoyladenosine(37) in tRNA + AMP + H(+). In terms of biological role, required for the formation of a threonylcarbamoyl group on adenosine at position 37 (t(6)A37) in tRNAs that read codons beginning with adenine. Is involved in the transfer of the threonylcarbamoyl moiety of threonylcarbamoyl-AMP (TC-AMP) to the N6 group of A37, together with TsaE and TsaB. TsaD likely plays a direct catalytic role in this reaction. The polypeptide is tRNA N6-adenosine threonylcarbamoyltransferase (Acaryochloris marina (strain MBIC 11017)).